A 1588-amino-acid chain; its full sequence is Paternally-expressed gene 3 protein (1588 aa).

The region spanning 46–128 (HQRFRNLIYV…TLLENYKEMY (83 aa)) is the SCAN box domain. Disordered regions lie at residues 128–230 (YQPE…ESYQ), 266–306 (DGHS…RRGI), and 319–349 (KFIKDVSRSSKSGRARESSDRSQRFPRMSDD). Positions 129–142 (QPEDDNNSDVTSDD) are enriched in acidic residues. 4 stretches are compositionally biased toward basic and acidic residues: residues 143 to 152 (DMTRNRRESS), 161 to 182 (SGDRDWDRRGRSRDMEPRDRWS), 206 to 225 (FEMDRDDDRDSRAYESRSQD), and 295 to 306 (PEAKKSTHRRGI). C2H2-type zinc fingers lie at residues 454 to 476 (YVCDECGRSFSVISEFVEHQIMH), 507 to 529 (FECKDCGETFNKSAALAEHRKIH), and 565 to 587 (YECRVCKETFLHSSALIEHQKIH). Residues 588-607 (FGDDKDNEREHERERERGET) show a composition bias toward basic and acidic residues. Residues 588 to 610 (FGDDKDNEREHERERERGETFRP) form a disordered region. The C2H2-type 4 zinc-finger motif lies at 627 to 649 (YECKVCGETFLHSSSLKEHQKIH). The interval 838–930 (LVASKPPRSH…EFSVPSSNVR (93 aa)) is disordered. The segment covering 868 to 881 (LNDKRQKIPARENP) has biased composition (basic and acidic residues). The C2H2-type 5 zinc-finger motif lies at 969-991 (YECQECGECFAHSSDLTEHQKIH). The disordered stretch occupies residues 1056 to 1104 (EKSHGEESQGENTDGEETHSEETHGQETIEDPVIQGSDMEDPQKDDPDD). Positions 1071 to 1082 (EETHSEETHGQE) are enriched in basic and acidic residues. 5 consecutive C2H2-type zinc fingers follow at residues 1107 to 1129 (YECEDCGLGFVDLTDLTDHQKVH), 1163 to 1185 (YECPKCGESFIHSSFLFEHQRIH), 1225 to 1247 (IRCLLCGQGFIHSSALNEHMRLH), 1282 to 1304 (FECAVCGESFINPAELADHVTVH), and 1332 to 1354 (YECKDCGKSFIHSTVLTKHKELH). The tract at residues 1393–1495 (EAAEPEVEAX…GIEDPEEGED (103 aa)) is disordered. Over residues 1395–1415 (AEPEVEAXEPEVEAAEPEVEA) the composition is skewed to acidic residues. 7 consecutive repeat copies span residues 1397 to 1403 (PEVEAXE), 1404 to 1410 (PEVEAAE), 1411 to 1417 (PEVEAAE), 1418 to 1422 (PNGEA), 1425 to 1429 (PDGEA), 1432 to 1436 (PIGEA), and 1439 to 1443 (PNGEA). The interval 1397–1417 (PEVEAXEPEVEAAEPEVEAAE) is 3 X 7 AA repeat of P-E-V-E-A-A-E. A 4 X 5 AA repeat of P-X-G-E-A region spans residues 1418–1443 (PNGEAEGPDGEAAEPIGEAGQPNGEA). 2 stretches are compositionally biased toward acidic residues: residues 1449–1466 (DADEPDGAGIEDPEERAE) and 1475–1495 (PEGDADEPDGVGIEDPEEGED). 2 consecutive C2H2-type zinc fingers follow at residues 1505–1527 (YDCHECTETFTSSTAFGEHLKTH) and 1564–1586 (FKCDVCGQLFNDRLSLARHQNTH).

It belongs to the krueppel C2H2-type zinc-finger protein family. In terms of assembly, homodimer. Interacts with SIAH1A and SIAH2. Interacts with TRAF2.

The protein localises to the nucleus. Its subcellular location is the cytoplasm. In terms of biological role, induces apoptosis in cooperation with SIAH1A. Acts as a mediator between p53/TP53 and BAX in a neuronal death pathway that is activated by DNA damage. Acts synergistically with TRAF2 and inhibits TNF induced apoptosis through activation of NF-kappa-B. The protein is Paternally-expressed gene 3 protein (PEG3) of Pan paniscus (Pygmy chimpanzee).